Consider the following 265-residue polypeptide: 5'-nucleotidase SurE (265 aa).

A divalent metal cation contacts are provided by D8, D9, S39, and N96.

This sequence belongs to the SurE nucleotidase family. A divalent metal cation is required as a cofactor.

It is found in the cytoplasm. The enzyme catalyses a ribonucleoside 5'-phosphate + H2O = a ribonucleoside + phosphate. Its function is as follows. Nucleotidase that shows phosphatase activity on nucleoside 5'-monophosphates. The sequence is that of 5'-nucleotidase SurE from Dehalococcoides mccartyi (strain CBDB1).